Consider the following 342-residue polypeptide: UDP-xylose transporter 1 (342 aa).

The next 10 helical transmembrane spans lie at 7–27 (MQMG…SIVI), 36–56 (LGFP…YCTL), 75–95 (VVLF…SLGF), 100–120 (FYQM…TLFL), 132–152 (LFLL…LNFV), 154–174 (SVLS…TNTI), 184–204 (QLLY…GPFV), 221–241 (IVVG…FSTF), 250–270 (VTYQ…GYTL), and 280–300 (IAGI…CSVA). Positions 305-342 (QASSDSTFLGKDRDTTPLLGQENENHHEAKKLDKHSPV) are disordered. Residues 327–342 (NENHHEAKKLDKHSPV) show a composition bias toward basic and acidic residues.

This sequence belongs to the TPT transporter family. TPT (TC 2.A.7.9) subfamily. In terms of tissue distribution, ubiquitous.

Its subcellular location is the golgi apparatus membrane. It is found in the endoplasmic reticulum membrane. In terms of biological role, nucleotide-sugar transporter that transports UDP-xylose and UMP in a strict counter-exchange mode. The sequence is that of UDP-xylose transporter 1 from Arabidopsis thaliana (Mouse-ear cress).